Consider the following 190-residue polypeptide: Protein SYM1 (190 aa).

4 helical membrane passes run 16 to 36, 54 to 74, 91 to 111, and 131 to 151; these read PVLG…VIAQ, IVTW…RTLE, LDQF…MTFM, and LQAN…LVPL.

It belongs to the peroxisomal membrane protein PXMP2/4 family.

It is found in the mitochondrion inner membrane. In terms of biological role, may be involved in cellular response to stress. Required to maintain mitochondrial DNA (mtDNA) integrity and stability. The sequence is that of Protein SYM1 (SYM1) from Cryptococcus neoformans var. neoformans serotype D (strain B-3501A) (Filobasidiella neoformans).